A 753-amino-acid polypeptide reads, in one-letter code: Rsm22-cox11 tandem protein 1, mitochondrial (753 aa).

A mitochondrion-targeting transit peptide spans 1–39 (MPILTCRYKILFLYNLRNCFTFQNQRCLIPYGTTTTIRW). Residues Cys323, Cys329, Cys342, and Cys430 each contribute to the [4Fe-4S] cluster site. The helical transmembrane segment at 571-591 (IYYLVAISIFALGLTYAAVPL) threads the bilayer. Residues 592–753 (YRLFCSKTGY…TNGNLLTKLN (162 aa)) are Mitochondrial intermembrane-facing.

It in the N-terminal section; belongs to the methyltransferase superfamily. Rsm22 family. This sequence in the C-terminal section; belongs to the COX11/CtaG family. As to quaternary structure, associates with the mitochondrial ribosome (mitoribosome). Only transiently interacts with the mitoribosome. In terms of processing, specific enzymatic cleavages in vivo by mitochondrial processing peptidase (MPP) yield mature proteins including rsm22-1 and cox11-1.

The protein resides in the mitochondrion. It is found in the mitochondrion inner membrane. Its function is as follows. Mitochondrial ribosome (mitoribosome) assembly factor. Binds at the interface of the head and body domains of the mitochondrial small ribosomal subunit (mt-SSU), occluding the mRNA channel and preventing compaction of the head domain towards the body. Probable inactive methyltransferase: retains the characteristic folding and ability to bind S-adenosyl-L-methionine, but it probably lost its methyltransferase activity. Functionally, exerts its effect at some terminal stage of cytochrome c oxidase synthesis, probably by being involved in the insertion of the copper B into subunit I. The chain is Rsm22-cox11 tandem protein 1, mitochondrial (cox1101) from Schizosaccharomyces pombe (strain 972 / ATCC 24843) (Fission yeast).